Reading from the N-terminus, the 284-residue chain is Acetyl-coenzyme A carboxylase carboxyl transferase subunit beta (284 aa).

The CoA carboxyltransferase N-terminal domain maps to 25–284 (LWTKCPKCES…ICRMLLQKSA (260 aa)). Zn(2+)-binding residues include Cys29, Cys32, Cys48, and Cys51. A C4-type zinc finger spans residues 29 to 51 (CPKCESTLYRAEVRRNLEVCPKC).

This sequence belongs to the AccD/PCCB family. In terms of assembly, acetyl-CoA carboxylase is a heterohexamer composed of biotin carboxyl carrier protein (AccB), biotin carboxylase (AccC) and two subunits each of ACCase subunit alpha (AccA) and ACCase subunit beta (AccD). It depends on Zn(2+) as a cofactor.

The protein resides in the cytoplasm. The catalysed reaction is N(6)-carboxybiotinyl-L-lysyl-[protein] + acetyl-CoA = N(6)-biotinyl-L-lysyl-[protein] + malonyl-CoA. It functions in the pathway lipid metabolism; malonyl-CoA biosynthesis; malonyl-CoA from acetyl-CoA: step 1/1. Functionally, component of the acetyl coenzyme A carboxylase (ACC) complex. Biotin carboxylase (BC) catalyzes the carboxylation of biotin on its carrier protein (BCCP) and then the CO(2) group is transferred by the transcarboxylase to acetyl-CoA to form malonyl-CoA. This Hydrogenovibrio crunogenus (strain DSM 25203 / XCL-2) (Thiomicrospira crunogena) protein is Acetyl-coenzyme A carboxylase carboxyl transferase subunit beta.